A 398-amino-acid chain; its full sequence is 1-deoxy-D-xylulose 5-phosphate reductoisomerase (398 aa).

NADPH-binding residues include threonine 13, glycine 14, serine 15, isoleucine 16, arginine 40, and asparagine 127. Residue lysine 128 participates in 1-deoxy-D-xylulose 5-phosphate binding. Glutamate 129 contributes to the NADPH binding site. Residue aspartate 153 participates in Mn(2+) binding. 1-deoxy-D-xylulose 5-phosphate contacts are provided by serine 154, glutamate 155, serine 188, and histidine 211. Residue glutamate 155 participates in Mn(2+) binding. Glycine 217 is an NADPH binding site. Serine 224, asparagine 229, lysine 230, and glutamate 233 together coordinate 1-deoxy-D-xylulose 5-phosphate. Glutamate 233 contacts Mn(2+).

The protein belongs to the DXR family. Mg(2+) is required as a cofactor. It depends on Mn(2+) as a cofactor.

It carries out the reaction 2-C-methyl-D-erythritol 4-phosphate + NADP(+) = 1-deoxy-D-xylulose 5-phosphate + NADPH + H(+). The protein operates within isoprenoid biosynthesis; isopentenyl diphosphate biosynthesis via DXP pathway; isopentenyl diphosphate from 1-deoxy-D-xylulose 5-phosphate: step 1/6. Functionally, catalyzes the NADPH-dependent rearrangement and reduction of 1-deoxy-D-xylulose-5-phosphate (DXP) to 2-C-methyl-D-erythritol 4-phosphate (MEP). This chain is 1-deoxy-D-xylulose 5-phosphate reductoisomerase, found in Cellvibrio japonicus (strain Ueda107) (Pseudomonas fluorescens subsp. cellulosa).